The following is a 249-amino-acid chain: Hydroxyacylglutathione hydrolase (249 aa).

Residues histidine 54, histidine 56, aspartate 58, histidine 59, histidine 113, aspartate 138, and histidine 176 each coordinate Zn(2+).

It belongs to the metallo-beta-lactamase superfamily. Glyoxalase II family. As to quaternary structure, monomer. Zn(2+) serves as cofactor.

The catalysed reaction is an S-(2-hydroxyacyl)glutathione + H2O = a 2-hydroxy carboxylate + glutathione + H(+). It participates in secondary metabolite metabolism; methylglyoxal degradation; (R)-lactate from methylglyoxal: step 2/2. Its function is as follows. Thiolesterase that catalyzes the hydrolysis of S-D-lactoyl-glutathione to form glutathione and D-lactic acid. The protein is Hydroxyacylglutathione hydrolase of Parasynechococcus marenigrum (strain WH8102).